Here is a 464-residue protein sequence, read N- to C-terminus: Trehalose-6-phosphate synthase (464 aa).

A D-glucose 6-phosphate-binding site is contributed by Arg-10. A UDP-alpha-D-glucose-binding site is contributed by 23 to 24 (GG). D-glucose 6-phosphate is bound by residues Tyr-81 and Asp-135. UDP-alpha-D-glucose is bound by residues Arg-268 and Lys-273. Arg-306 contributes to the D-glucose 6-phosphate binding site. 371–375 (LVAKE) lines the UDP-alpha-D-glucose pocket.

This sequence belongs to the glycosyltransferase 20 family. As to quaternary structure, homotetramer.

It carries out the reaction D-glucose 6-phosphate + UDP-alpha-D-glucose = alpha,alpha-trehalose 6-phosphate + UDP + H(+). It participates in glycan biosynthesis; trehalose biosynthesis. In terms of biological role, probably involved in the osmoprotection via the biosynthesis of trehalose. Catalyzes the transfer of glucose from UDP-alpha-D-glucose (UDP-Glc) to D-glucose 6-phosphate (Glc-6-P) to form trehalose-6-phosphate. Acts with retention of the anomeric configuration of the UDP-sugar donor. This chain is Trehalose-6-phosphate synthase, found in Sinorhizobium fredii (strain NBRC 101917 / NGR234).